Consider the following 78-residue polypeptide: Acyl carrier protein (78 aa).

Residues 2 to 77 (STIEERVKKI…EAIDYINAHA (76 aa)) form the Carrier domain. S37 carries the post-translational modification O-(pantetheine 4'-phosphoryl)serine.

The protein belongs to the acyl carrier protein (ACP) family. Post-translationally, 4'-phosphopantetheine is transferred from CoA to a specific serine of apo-ACP by AcpS. This modification is essential for activity because fatty acids are bound in thioester linkage to the sulfhydryl of the prosthetic group.

The protein localises to the cytoplasm. The protein operates within lipid metabolism; fatty acid biosynthesis. In terms of biological role, carrier of the growing fatty acid chain in fatty acid biosynthesis. This chain is Acyl carrier protein, found in Stutzerimonas stutzeri (strain A1501) (Pseudomonas stutzeri).